The following is a 452-amino-acid chain: GTPase Der (452 aa).

2 EngA-type G domains span residues 4-169 and 177-352; these read PIVA…PAPQ and IKVA…QEHR. GTP-binding positions include 10 to 17, 57 to 61, 120 to 123, 183 to 190, 230 to 234, and 295 to 298; these read GRPNVGKS, DTGGL, NKCE, DTAGI, and NKWD. The KH-like domain occupies 353-439; it reads RRVTTAVINE…IRLFWRGKKV (87 aa).

It belongs to the TRAFAC class TrmE-Era-EngA-EngB-Septin-like GTPase superfamily. EngA (Der) GTPase family. Associates with the 50S ribosomal subunit.

Functionally, GTPase that plays an essential role in the late steps of ribosome biogenesis. In Synechocystis sp. (strain ATCC 27184 / PCC 6803 / Kazusa), this protein is GTPase Der.